The chain runs to 323 residues: Aspartate carbamoyltransferase catalytic subunit (323 aa).

2 residues coordinate carbamoyl phosphate: Arg71 and Thr72. Lys99 contributes to the L-aspartate binding site. Positions 121, 151, and 154 each coordinate carbamoyl phosphate. Positions 184 and 239 each coordinate L-aspartate. The carbamoyl phosphate site is built by Gly280 and Pro281.

The protein belongs to the aspartate/ornithine carbamoyltransferase superfamily. ATCase family. Heterododecamer (2C3:3R2) of six catalytic PyrB chains organized as two trimers (C3), and six regulatory PyrI chains organized as three dimers (R2).

The enzyme catalyses carbamoyl phosphate + L-aspartate = N-carbamoyl-L-aspartate + phosphate + H(+). The protein operates within pyrimidine metabolism; UMP biosynthesis via de novo pathway; (S)-dihydroorotate from bicarbonate: step 2/3. In terms of biological role, catalyzes the condensation of carbamoyl phosphate and aspartate to form carbamoyl aspartate and inorganic phosphate, the committed step in the de novo pyrimidine nucleotide biosynthesis pathway. This is Aspartate carbamoyltransferase catalytic subunit from Cupriavidus metallidurans (strain ATCC 43123 / DSM 2839 / NBRC 102507 / CH34) (Ralstonia metallidurans).